Reading from the N-terminus, the 543-residue chain is MSRESDVEAQQSHGSSACSQPHGSVTQSQGSSSQSQGISSSSTSTMPNSSQSSHSSSGTLSSLETVSTQELYSIPEDQEPEDQEPEEPTPAPWARLWALQDGFANLECVNDNYWFGRDKSCEYCFDEPLLKRTDKYRTYSKKHFRIFREVGPKNSYIAYIEDHSGNGTFVNTELVGKGKRRPLNNNSEIALSLSRNKVFVFFDLTVDDQSVYPKALRDEYIMSKTLGSGACGEVKLAFERKTCKKVAIKIISKRKFAIGSAREADPALNVETEIEILKKLNHPCIIKIKNFFDAEDYYIVLELMEGGELFDKVVGNKRLKEATCKLYFYQMLLAVQYLHENGIIHRDLKPENVLLSSQEEDCLIKITDFGHSKILGETSLMRTLCGTPTYLAPEVLVSVGTAGYNRAVDCWSLGVILFICLSGYPPFSEHRTQVSLKDQITSGKYNFIPEVWAEVSEKALDLVKKLLVVDPKARFTTEEALRHPWLQDEDMKRKFQDLLSEENESTALPQVLAQPSTSRKRPREGEAEGAETTKRPAVCAAVL.

The tract at residues 1-66 (MSRESDVEAQ…SGTLSSLETV (66 aa)) is disordered. A compositionally biased stretch (polar residues) spans 8 to 22 (EAQQSHGSSACSQPH). Low complexity predominate over residues 23–62 (GSVTQSQGSSSQSQGISSSSTSTMPNSSQSSHSSSGTLSS). Ser-62 carries the post-translational modification Phosphoserine; by PLK3. Thr-68 carries the phosphothreonine; by ATM and MAP3K20 modification. Phosphoserine; by PLK3 is present on Ser-73. Residues 113–175 (YWFGRDKSCE…NGTFVNTELV (63 aa)) enclose the FHA domain. The Protein kinase domain maps to 220 to 486 (YIMSKTLGSG…TEEALRHPWL (267 aa)). Residues 227 to 234 (GSGACGEV), Lys-249, and 302 to 308 (ELMEGGE) contribute to the ATP site. The active-site Proton acceptor is the Asp-347. ATP-binding positions include 351 to 352 (EN) and Asp-368. The tract at residues 368–394 (DFGHSKILGETSLMRTLCGTPTYLAPE) is T-loop/activation segment. Ser-379 carries the post-translational modification Phosphoserine; by autocatalysis. Residues Thr-383 and Thr-387 each carry the phosphothreonine; by autocatalysis modification. Ser-456 carries the post-translational modification Phosphoserine. The segment covering 506-517 (TALPQVLAQPST) has biased composition (polar residues). Residues 506–538 (TALPQVLAQPSTSRKRPREGEAEGAETTKRPAV) form a disordered region. Residues 523-534 (REGEAEGAETTK) show a composition bias toward basic and acidic residues.

Belongs to the protein kinase superfamily. CAMK Ser/Thr protein kinase family. CHK2 subfamily. As to quaternary structure, homodimer. Homodimerization is part of the activation process but the dimer may dissociate following activation. Interacts with PML. Interacts with TP53. Interacts with RB1; phosphorylates RB1. Interacts with BRCA1. Interacts (phosphorylated at Thr-68) with MDC1; requires ATM-mediated phosphorylation of CHEK2. Interacts with TP53BP1; modulates CHEK2 phosphorylation at Thr-68 in response to ionizing radiation. Interacts with CDC25A; phosphorylates CDC25A and mediates its degradation in response to ionizing radiation. Interacts with CUL1; mediates CHEK2 ubiquitination and regulation. Interacts with CDKN2AIP. Interacts (via protein kinase domain) with CCAR2 (via N-terminus). Interacts with SIRT1. It depends on Mg(2+) as a cofactor. Post-translationally, phosphorylated. Phosphorylated at Ser-73 by PLK3 in response to DNA damage, promoting phosphorylation at Thr-68 by ATM and the G2/M transition checkpoint. Phosphorylation at Thr-68 induces homodimerization. Autophosphorylates at Thr-383 and Thr-387 in the T-loop/activation segment upon dimerization to become fully active and phosphorylate its substrates like for instance CDC25C. DNA damage-induced autophosphorylation at Ser-379 induces CUL1-mediated ubiquitination and regulates the pro-apoptotic function. Phosphorylation at Ser-456 also regulates ubiquitination. Phosphorylated by PLK4. In terms of processing, ubiquitinated. CUL1-mediated ubiquitination regulates the pro-apoptotic function. Ubiquitination may also regulate protein stability. Ubiquitinated by RNF8 via 'Lys-48'-linked ubiquitination. In terms of tissue distribution, high expression is found in testis, spleen, colon and peripheral blood leukocytes. Low expression is found in other tissues.

Its subcellular location is the nucleus. It is found in the PML body. It localises to the nucleoplasm. It catalyses the reaction L-seryl-[protein] + ATP = O-phospho-L-seryl-[protein] + ADP + H(+). It carries out the reaction L-threonyl-[protein] + ATP = O-phospho-L-threonyl-[protein] + ADP + H(+). Activated through phosphorylation at Thr-68 by ATM in response to DNA double-strand breaks. Activation is modulated by several mediators including MDC1 and TP53BP1. Induces homodimerization with exchange of the T-loop/activation segment between protomers and transphosphorylation of the protomers. The autophosphorylated kinase dimer is fully active. Negatively regulated by PPM1D through dephosphorylation of Thr-68. Functionally, serine/threonine-protein kinase which is required for checkpoint-mediated cell cycle arrest, activation of DNA repair and apoptosis in response to the presence of DNA double-strand breaks. May also negatively regulate cell cycle progression during unperturbed cell cycles. Following activation, phosphorylates numerous effectors preferentially at the consensus sequence [L-X-R-X-X-S/T]. Regulates cell cycle checkpoint arrest through phosphorylation of CDC25A, CDC25B and CDC25C, inhibiting their activity. Inhibition of CDC25 phosphatase activity leads to increased inhibitory tyrosine phosphorylation of CDK-cyclin complexes and blocks cell cycle progression. May also phosphorylate NEK6 which is involved in G2/M cell cycle arrest. Regulates DNA repair through phosphorylation of BRCA2, enhancing the association of RAD51 with chromatin which promotes DNA repair by homologous recombination. Also stimulates the transcription of genes involved in DNA repair (including BRCA2) through the phosphorylation and activation of the transcription factor FOXM1. Regulates apoptosis through the phosphorylation of p53/TP53, MDM4 and PML. Phosphorylation of p53/TP53 at 'Ser-20' by CHEK2 may alleviate inhibition by MDM2, leading to accumulation of active p53/TP53. Phosphorylation of MDM4 may also reduce degradation of p53/TP53. Also controls the transcription of pro-apoptotic genes through phosphorylation of the transcription factor E2F1. Tumor suppressor, it may also have a DNA damage-independent function in mitotic spindle assembly by phosphorylating BRCA1. Its absence may be a cause of the chromosomal instability observed in some cancer cells. Promotes the CCAR2-SIRT1 association and is required for CCAR2-mediated SIRT1 inhibition. Under oxidative stress, promotes ATG7 ubiquitination by phosphorylating the E3 ubiquitin ligase TRIM32 at 'Ser-55' leading to positive regulation of the autophagosme assembly. (Microbial infection) Phosphorylates herpes simplex virus 1/HHV-1 protein ICP0 and thus activates its SUMO-targeted ubiquitin ligase activity. This chain is Serine/threonine-protein kinase Chk2, found in Homo sapiens (Human).